We begin with the raw amino-acid sequence, 237 residues long: Ribonuclease PH (237 aa).

Phosphate is bound by residues arginine 86 and 124 to 126; that span reads GTR.

It belongs to the RNase PH family. In terms of assembly, homohexameric ring arranged as a trimer of dimers.

It carries out the reaction tRNA(n+1) + phosphate = tRNA(n) + a ribonucleoside 5'-diphosphate. Functionally, phosphorolytic 3'-5' exoribonuclease that plays an important role in tRNA 3'-end maturation. Removes nucleotide residues following the 3'-CCA terminus of tRNAs; can also add nucleotides to the ends of RNA molecules by using nucleoside diphosphates as substrates, but this may not be physiologically important. Probably plays a role in initiation of 16S rRNA degradation (leading to ribosome degradation) during starvation. The protein is Ribonuclease PH of Nitrobacter winogradskyi (strain ATCC 25391 / DSM 10237 / CIP 104748 / NCIMB 11846 / Nb-255).